The sequence spans 233 residues: uncharacterized protein (233 aa).

2 disordered regions span residues 1-159 (MGKH…NEKL) and 181-206 (MGVK…QDKM). Residues 36-115 (RDRSRSPHKE…RRDDKNRLSA (80 aa)) show a composition bias toward basic and acidic residues. A compositionally biased stretch (low complexity) spans 135 to 148 (SSSSNTTDTASSSS). Residues 189–206 (PTDDSSRLSDEKNRQDKM) are compositionally biased toward basic and acidic residues.

This is an uncharacterized protein from Caenorhabditis elegans.